A 253-amino-acid chain; its full sequence is Tabinhibitin 3 (253 aa).

The first 22 residues, 1–22 (MTLKRIFCAALALIVLQSVASA), serve as a signal peptide directing secretion. One can recognise an SCP domain in the interval 66–209 (LQKTNWLRGV…LKRALFTCNF (144 aa)). Positions 222 to 224 (RGD) match the Cell attachment site motif.

Belongs to the CRISP family. As to expression, expressed in salivary glands.

The protein resides in the secreted. Functionally, inhibits platelet aggregation induced by all agonists tested (ADP, arachidonic acid, the thromboxane A2 analog U46619, thrombin, and snake venom snaclecs (TMVA that activates platelet through GPIB, and stejnulxin that specifically acts through GPVI (GP6))). May act by competing with fibrinogen for binding to glycoprotein IIb/IIIa (ITGA2B/ITGB3). The polypeptide is Tabinhibitin 3 (Tabanus yao (Horsefly)).